The chain runs to 98 residues: Large ribosomal subunit protein bL21 (98 aa).

This sequence belongs to the bacterial ribosomal protein bL21 family. Part of the 50S ribosomal subunit. Contacts protein L20.

This protein binds to 23S rRNA in the presence of protein L20. This is Large ribosomal subunit protein bL21 from Novosphingobium aromaticivorans (strain ATCC 700278 / DSM 12444 / CCUG 56034 / CIP 105152 / NBRC 16084 / F199).